Reading from the N-terminus, the 161-residue chain is Globin CTT-VIIB-8 (161 aa).

An N-terminal signal peptide occupies residues 1-16; the sequence is MKFFAVLALCIVGAIA. The Globin domain occupies 18 to 161; sequence PLTADEASLV…NTYAIVVPRL (144 aa). Heme b-binding residues include histidine 76 and histidine 111.

This sequence belongs to the globin family. As to quaternary structure, homodimer.

This is Globin CTT-VIIB-8 (CTT-7B8) from Chironomus thummi thummi (Midge).